The following is a 483-amino-acid chain: tRNA-2-methylthio-N(6)-dimethylallyladenosine synthase (483 aa).

Residues 31–148 enclose the MTTase N-terminal domain; the sequence is KKLYIETQGC…LPQMLDQHHA (118 aa). C40, C77, C111, C192, C196, and C199 together coordinate [4Fe-4S] cluster. One can recognise a Radical SAM core domain in the interval 178–410; sequence RVEGFKAFVS…QQVIKQSSIE (233 aa). Residues 413–477 form the TRAM domain; that stretch reads DAMLGKIERV…LNLVYGELLN (65 aa).

It belongs to the methylthiotransferase family. MiaB subfamily. In terms of assembly, monomer. [4Fe-4S] cluster serves as cofactor.

It localises to the cytoplasm. It catalyses the reaction N(6)-dimethylallyladenosine(37) in tRNA + (sulfur carrier)-SH + AH2 + 2 S-adenosyl-L-methionine = 2-methylsulfanyl-N(6)-dimethylallyladenosine(37) in tRNA + (sulfur carrier)-H + 5'-deoxyadenosine + L-methionine + A + S-adenosyl-L-homocysteine + 2 H(+). Its function is as follows. Catalyzes the methylthiolation of N6-(dimethylallyl)adenosine (i(6)A), leading to the formation of 2-methylthio-N6-(dimethylallyl)adenosine (ms(2)i(6)A) at position 37 in tRNAs that read codons beginning with uridine. This chain is tRNA-2-methylthio-N(6)-dimethylallyladenosine synthase, found in Acinetobacter baumannii (strain AB0057).